Consider the following 595-residue polypeptide: DNA damage-binding protein CMR1 (595 aa).

Residues 20 to 79 form a disordered region; that stretch reads ALLDSLGLDPAGASSPFGSSPAPTSNKTKPKPKPAPKKRKAAAVIAVDEGPRRRSGRIAG. Residues 29–46 show a composition bias toward low complexity; sequence PAGASSPFGSSPAPTSNK. Residues 47–60 show a composition bias toward basic residues; that stretch reads TKPKPKPAPKKRKA. WD repeat units follow at residues 185–226, 255–297, 300–339, and 349–389; these read VTNE…MEKP, HAKN…ELFS, DEDL…RESG, and GRGA…SISS. The tract at residues 397–429 is disordered; sequence AIEEEEEGTSTLSGQSSSLPHDTHPTRESDYST. The segment covering 405 to 415 has biased composition (low complexity); the sequence is TSTLSGQSSSL. A compositionally biased stretch (basic and acidic residues) spans 417–426; sequence HDTHPTRESD. WD repeat units follow at residues 448 to 487, 519 to 556, and 558 to 595; these read QHGK…SLVD, LRAQ…VGLW, and DDVT…GDHI.

Belongs to the WD repeat DDB2/WDR76 family.

DNA-binding protein that binds to both single- and double-stranded DNA. Binds preferentially to UV-damaged DNA. May be involved in DNA-metabolic processes. The polypeptide is DNA damage-binding protein CMR1 (Cryptococcus neoformans var. neoformans serotype D (strain B-3501A) (Filobasidiella neoformans)).